A 107-amino-acid polypeptide reads, in one-letter code: Universal stress protein B homolog (107 aa).

A run of 2 helical transmembrane segments spans residues 6–26 (IILFALMVVTGVNLARYLTAL) and 86–106 (VRELFVLSVSLTGVTLLAAFL).

Belongs to the universal stress protein B family.

Its subcellular location is the cell inner membrane. The sequence is that of Universal stress protein B homolog from Vibrio vulnificus (strain CMCP6).